A 316-amino-acid polypeptide reads, in one-letter code: Ferrochelatase (316 aa).

Fe cation is bound by residues H190 and E271.

The protein belongs to the ferrochelatase family.

The protein localises to the cytoplasm. The catalysed reaction is heme b + 2 H(+) = protoporphyrin IX + Fe(2+). Its pathway is porphyrin-containing compound metabolism; protoheme biosynthesis; protoheme from protoporphyrin-IX: step 1/1. In terms of biological role, catalyzes the ferrous insertion into protoporphyrin IX. This Sulfurimonas denitrificans (strain ATCC 33889 / DSM 1251) (Thiomicrospira denitrificans (strain ATCC 33889 / DSM 1251)) protein is Ferrochelatase.